The following is a 685-amino-acid chain: Multisite-specific tRNA:(cytosine-C(5))-methyltransferase trm4b (685 aa).

S-adenosyl-L-methionine contacts are provided by residues 167–173, D208, D235, and D270; that span reads CAAPGSK. C323 (nucleophile) is an active-site residue.

This sequence belongs to the class I-like SAM-binding methyltransferase superfamily. RsmB/NOP family. TRM4 subfamily.

The protein localises to the nucleus. It catalyses the reaction cytidine(49) in tRNA precursor + S-adenosyl-L-methionine = 5-methylcytidine(49) in tRNA precursor + S-adenosyl-L-homocysteine + H(+). The enzyme catalyses cytidine(50) in tRNA + S-adenosyl-L-methionine = 5-methylcytidine(50) in tRNA + S-adenosyl-L-homocysteine + H(+). It carries out the reaction cytidine(60) in tRNA(Asp) + S-adenosyl-L-methionine = 5-methylcytidine(60) in tRNA(Asp) + S-adenosyl-L-homocysteine + H(+). The catalysed reaction is cytidine(61) in tRNA(Asp) + S-adenosyl-L-methionine = 5-methylcytidine(61) in tRNA(Asp) + S-adenosyl-L-homocysteine + H(+). It catalyses the reaction cytidine(62) in tRNA(Asp) + S-adenosyl-L-methionine = 5-methylcytidine(62) in tRNA(Asp) + S-adenosyl-L-homocysteine + H(+). Its function is as follows. tRNA cytosine C(5)-methyltransferase that methylates cytosine to 5-methylcytosine (m5C) in tRNAs at position 49 and 50. Trm4a and trm4b methylate different sets of tRNAs. Also methylates cytosine to m5C at positions (60, 61 and 62) in tRNA(Asp). This Schizosaccharomyces pombe (strain 972 / ATCC 24843) (Fission yeast) protein is Multisite-specific tRNA:(cytosine-C(5))-methyltransferase trm4b.